The sequence spans 444 residues: Methylenetetrahydrofolate--tRNA-(uracil-5-)-methyltransferase TrmFO (444 aa).

An FAD-binding site is contributed by 10-15 (GAGLAG).

Belongs to the MnmG family. TrmFO subfamily. Requires FAD as cofactor.

The protein localises to the cytoplasm. It carries out the reaction uridine(54) in tRNA + (6R)-5,10-methylene-5,6,7,8-tetrahydrofolate + NADH + H(+) = 5-methyluridine(54) in tRNA + (6S)-5,6,7,8-tetrahydrofolate + NAD(+). It catalyses the reaction uridine(54) in tRNA + (6R)-5,10-methylene-5,6,7,8-tetrahydrofolate + NADPH + H(+) = 5-methyluridine(54) in tRNA + (6S)-5,6,7,8-tetrahydrofolate + NADP(+). Its function is as follows. Catalyzes the folate-dependent formation of 5-methyl-uridine at position 54 (M-5-U54) in all tRNAs. The chain is Methylenetetrahydrofolate--tRNA-(uracil-5-)-methyltransferase TrmFO from Streptococcus equi subsp. zooepidemicus (strain H70).